Consider the following 1001-residue polypeptide: Translation initiation factor IF-2 (1001 aa).

The interval 34 to 404 is disordered; sequence KSHSSTISES…SRGDRRDRKE (371 aa). Basic and acidic residues predominate over residues 67 to 80; it reads SRPESKEDKSDPKQ. 3 stretches are compositionally biased toward pro residues: residues 98–107, 147–157, and 163–172; these read PARPTPPPRP, PTQPLAPPPVP, and PSKPAPPTPP. Low complexity predominate over residues 173–190; the sequence is AKKAAPAPRLAGPPGRTA. Basic and acidic residues-rich tracts occupy residues 212–230 and 238–252; these read SLKDNRGQARSPGDREEKV and PKPKVELRRPKPPRP. Residues 332 to 342 show a composition bias toward acidic residues; sequence DDDDDDLDIDG. Composition is skewed to low complexity over residues 362–371 and 385–394; these read KSLAAKPSTP and AGSSAGGSSR. Positions 395-404 are enriched in basic and acidic residues; that stretch reads SRGDRRDRKE. Positions 493 to 666 constitute a tr-type G domain; the sequence is RRPPVVTIMG…LLVSEVEELV (174 aa). The G1 stretch occupies residues 502 to 509; sequence GHVDHGKT. A GTP-binding site is contributed by 502–509; that stretch reads GHVDHGKT. Residues 527–531 form a G2 region; sequence GITQH. A G3 region spans residues 552–555; that stretch reads DTPG. Residues 552–556 and 606–609 contribute to the GTP site; these read DTPGH and NKVD. Residues 606–609 are G4; sequence NKVD. Residues 642–644 form a G5 region; the sequence is SAL.

It belongs to the TRAFAC class translation factor GTPase superfamily. Classic translation factor GTPase family. IF-2 subfamily.

It localises to the cytoplasm. Its function is as follows. One of the essential components for the initiation of protein synthesis. Protects formylmethionyl-tRNA from spontaneous hydrolysis and promotes its binding to the 30S ribosomal subunits. Also involved in the hydrolysis of GTP during the formation of the 70S ribosomal complex. This is Translation initiation factor IF-2 (infB) from Synechocystis sp. (strain ATCC 27184 / PCC 6803 / Kazusa).